We begin with the raw amino-acid sequence, 78 residues long: Ferredoxin (78 aa).

2 consecutive 4Fe-4S ferredoxin-type domains span residues 2–29 and 30–59; these read FVIT…HEGP and DQYY…QEEF. The [3Fe-4S] cluster site is built by cysteine 8 and cysteine 16. The [4Fe-4S] cluster site is built by cysteine 20, cysteine 39, cysteine 42, and cysteine 45. Residue cysteine 49 coordinates [3Fe-4S] cluster.

It depends on [3Fe-4S] cluster as a cofactor. [4Fe-4S] cluster serves as cofactor.

Ferredoxins are iron-sulfur proteins that transfer electrons in a wide variety of metabolic reactions. This chain is Ferredoxin, found in Alicyclobacillus acidocaldarius subsp. acidocaldarius (Bacillus acidocaldarius).